We begin with the raw amino-acid sequence, 23 residues long: Alpha-amanitin proprotein (23 aa).

I1 is modified ((3R,4R)-4,5-dihydroxyisoleucine; in form alpha-amanitin). I1 bears the (3R,4S)-4-hydroxyisoleucine; in form gamma-amanitin mark. The cyclopeptide (Ile-Pro) cross-link spans 1 to 8; sequence IWGIGCNP. The segment at residues 2-6 is a cross-link (2'-cysteinyl-6'-hydroxytryptophan sulfoxide (Trp-Cys)); the sequence is WGIGC. 4-hydroxyproline is present on P8. Residues 9 to 23 constitute a propeptide that is removed on maturation; the sequence is CVGDEVTALITRGEA.

The protein belongs to the MSDIN fungal toxin family. In terms of processing, processed by the macrocyclase-peptidase enzyme POPB to yield a toxic cyclic decapeptide. POPB first removes 10 residues from the N-terminus. Conformational trapping of the remaining peptide forces the enzyme to release this intermediate rather than proceed to macrocyclization. The enzyme rebinds the remaining peptide in a different conformation and catalyzes macrocyclization of the N-terminal 8 residues.

Major toxin belonging to the bicyclic octapeptides amatoxins that acts by binding non-competitively to RNA polymerase II and greatly slowing the elongation of transcripts from target promoters. The polypeptide is Alpha-amanitin proprotein (Amanita fuligineoides).